We begin with the raw amino-acid sequence, 265 residues long: MIKWPWKAQEITQNEDWPWNDALAIPLLVNLTAQEQARLIALAERFLQQKRLVALQGFELDSLKSARIALIFCLPILELGIEWLDGFHEVLIYPAPFVVDDEWEDDIGLVHSQRVVQSGQSWQQGPIILNWLDIQDSFDASGFNLIIHEVAHKLDMRNGDRASGIPFIPLRDVAGWEHDLHAAMNNIQDEIDLVGESAASIDAYAATDPAECFAVLSEYFFSAPELFAPRFPALWQRFCQFYRQDPSQRLRVNAAEGDYGEESEH.

Zn(2+)-binding residues include His111, His148, His152, and Glu211.

Belongs to the MtfA family. Interacts with Mlc. The cofactor is Zn(2+).

Its subcellular location is the cytoplasm. Involved in the modulation of the activity of the glucose-phosphotransferase system (glucose-PTS). Interacts with the transcriptional repressor Mlc, preventing its interaction with DNA and leading to the modulation of expression of genes regulated by Mlc, including ptsG, which encodes the PTS system glucose-specific EIICB component. Functionally, shows zinc-dependent metallopeptidase activity. The protein is Mlc titration factor A of Salmonella schwarzengrund (strain CVM19633).